A 407-amino-acid chain; its full sequence is Elongation factor Tu, chloroplastic (407 aa).

The 203-residue stretch at 10–212 (KPHVNIGTIG…SVDNYIPAPE (203 aa)) folds into the tr-type G domain. Positions 19–26 (GHVDHGKT) are G1. Residue 19 to 26 (GHVDHGKT) participates in GTP binding. T26 is a Mg(2+) binding site. Residues 59–63 (GITIN) are G2. The tract at residues 80–83 (DCPG) is G3. GTP is bound by residues 80 to 84 (DCPGH) and 135 to 138 (NKAD). The interval 135 to 138 (NKAD) is G4. Residues 173-175 (SAL) are G5.

It belongs to the TRAFAC class translation factor GTPase superfamily. Classic translation factor GTPase family. EF-Tu/EF-1A subfamily.

It localises to the plastid. Its subcellular location is the chloroplast. It catalyses the reaction GTP + H2O = GDP + phosphate + H(+). In terms of biological role, GTP hydrolase that promotes the GTP-dependent binding of aminoacyl-tRNA to the A-site of ribosomes during protein biosynthesis. The protein is Elongation factor Tu, chloroplastic (tufA) of Emiliania huxleyi (Coccolithophore).